We begin with the raw amino-acid sequence, 593 residues long: Probable serine/threonine-protein kinase fhkA (593 aa).

Residues 1–24 (MSQTNYIPSTPNKSTPPSELSSTP) are disordered. The FHA domain occupies 54–111 (ITIGRSKTCNIVVPELIVSGKHCIITRADAIENGNTNYGLLMIQDQSTNGTFINGKLI). Residues 180–472 (YDFIKELGSG…VEQALNHPWI (293 aa)) form the Protein kinase domain. Residues 186-194 (LGSGNFSVV) and lysine 209 each bind ATP. The active-site Proton acceptor is the aspartate 307.

Belongs to the protein kinase superfamily. CAMK Ser/Thr protein kinase family. CHK2 subfamily.

It catalyses the reaction L-seryl-[protein] + ATP = O-phospho-L-seryl-[protein] + ADP + H(+). It carries out the reaction L-threonyl-[protein] + ATP = O-phospho-L-threonyl-[protein] + ADP + H(+). The sequence is that of Probable serine/threonine-protein kinase fhkA (fhkA) from Dictyostelium discoideum (Social amoeba).